The sequence spans 34 residues: Photosystem II reaction center protein Psb30 (34 aa).

A helical membrane pass occupies residues 9-29; the sequence is QLIATGTIMLAGPAVIVLLAL.

This sequence belongs to the Psb30/Ycf12 family. In terms of assembly, PSII is composed of 1 copy each of membrane proteins PsbA, PsbB, PsbC, PsbD, PsbE, PsbF, PsbH, PsbI, PsbJ, PsbK, PsbL, PsbM, PsbT, PsbX, PsbY, PsbZ, Psb30/Ycf12, peripheral proteins of the oxygen-evolving complex and a large number of cofactors. It forms dimeric complexes.

The protein resides in the plastid. It is found in the chloroplast thylakoid membrane. In terms of biological role, a core subunit of photosystem II (PSII), probably helps stabilize the reaction center. This Phaeodactylum tricornutum (strain CCAP 1055/1) protein is Photosystem II reaction center protein Psb30.